The sequence spans 225 residues: UPF0758 protein Sden_0326 (225 aa).

Residues I102–L224 form the MPN domain. Zn(2+) contacts are provided by H173, H175, and D186. The short motif at H173 to D186 is the JAMM motif element.

The protein belongs to the UPF0758 family.

The sequence is that of UPF0758 protein Sden_0326 from Shewanella denitrificans (strain OS217 / ATCC BAA-1090 / DSM 15013).